The primary structure comprises 379 residues: Transcription termination factor 1a, mitochondrial (379 aa).

The transit peptide at Met-1–Pro-37 directs the protein to the mitochondrion. 5 interaction with DNA regions span residues Arg-151–Ser-152, Gln-229–Arg-233, Ser-306–Lys-313, Ser-337–Thr-340, and Ser-366–Lys-373.

The protein belongs to the mTERF family. As to quaternary structure, monomer. In terms of processing, phosphoprotein with mostly four phosphate groups. While the DNA-binding activity is unaffected by the phosphorylation state, only the phosphorylated form of the protein is active for termination activity. Functioning seems to be regulated by phosphorylation. In terms of tissue distribution, predominantly expressed in heart and liver, with extremely low levels in other tissues. Expressed strongly in the heart and at lower levels in brain, liver and kidney.

It localises to the mitochondrion. Functionally, transcription termination factor. Binds to a 28 bp region within the tRNA(Leu(uur)) gene at a position immediately adjacent to and downstream of the 16S rRNA gene; this region comprises a tridecamer sequence critical for directing accurate termination. Binds DNA along the major grove and promotes DNA bending and partial unwinding. Promotes base flipping. Transcription termination activity appears to be polarized with highest specificity for transcripts initiated on the light strand. This Mus musculus (Mouse) protein is Transcription termination factor 1a, mitochondrial (Mterf1a).